The following is a 293-amino-acid chain: Delta(3,5)-Delta(2,4)-dienoyl-CoA isomerase, mitochondrial (293 aa).

Substrate contacts are provided by residues 84–88 (AGLNL) and glycine 142.

The protein belongs to the enoyl-CoA hydratase/isomerase family.

The protein resides in the mitochondrion. It catalyses the reaction (3E,5Z)-octadienoyl-CoA = (2E,4E)-octadienoyl-CoA. The catalysed reaction is (3E,5Z,8Z,11Z,14Z)-eicosapentaenoyl-CoA = (2E,4E,8Z,11Z,14Z)-eicosapentaenoyl-CoA. It participates in lipid metabolism; fatty acid beta-oxidation. In terms of biological role, isomerization of 3-trans,5-cis-dienoyl-CoA to 2-trans,4-trans-dienoyl-CoA. The protein is Delta(3,5)-Delta(2,4)-dienoyl-CoA isomerase, mitochondrial (ech1) of Dictyostelium discoideum (Social amoeba).